Reading from the N-terminus, the 221-residue chain is Small ribosomal subunit protein uS3 (221 aa).

A KH type-2 domain is found at 39-108; that stretch reads IRKFVKKELF…NVLINIVEVK (70 aa).

The protein belongs to the universal ribosomal protein uS3 family. As to quaternary structure, part of the 30S ribosomal subunit. Forms a tight complex with proteins S10 and S14.

Binds the lower part of the 30S subunit head. Binds mRNA in the 70S ribosome, positioning it for translation. The polypeptide is Small ribosomal subunit protein uS3 (Clostridium beijerinckii (strain ATCC 51743 / NCIMB 8052) (Clostridium acetobutylicum)).